The sequence spans 363 residues: Guanine nucleotide-binding protein alpha-11 subunit (363 aa).

The G-alpha domain maps to 26–363; that stretch reads KMLKILLLGG…KISMEKVGFM (338 aa). A G1 motif region spans residues 29–42; sequence KILLLGGPECGKST. GTP contacts are provided by residues 34–41, 172–178, 197–201, 276–279, and A335; these read GGPECGKS, LRARVPT, DVGGQ, and NKID. 2 residues coordinate Mg(2+): S41 and T178. Residues 170-178 are G2 motif; sequence DVLRARVPT. The segment at 193–202 is G3 motif; sequence LRMVDVGGQR. Residues 272-279 form a G4 motif region; sequence ILFLNKID. Residues 333 to 338 are G5 motif; sequence TNATDT.

Belongs to the G-alpha family. G proteins are composed of 3 units; alpha, beta and gamma. The alpha chain contains the guanine nucleotide binding site. In terms of tissue distribution, expressed in ADL and ASH neurons.

Its function is as follows. Guanine nucleotide-binding proteins (G proteins) are involved as modulators or transducers in various transmembrane signaling systems. Mediates the transduction of food and serotonin signals, which modulates the avoidance response to the odorant octanol. Has a role in lifespan to promote longevity. In Caenorhabditis elegans, this protein is Guanine nucleotide-binding protein alpha-11 subunit (gpa-11).